Here is a 337-residue protein sequence, read N- to C-terminus: UDP-3-O-acylglucosamine N-acyltransferase (337 aa).

Catalysis depends on histidine 238, which acts as the Proton acceptor.

The protein belongs to the transferase hexapeptide repeat family. LpxD subfamily. In terms of assembly, homotrimer.

It catalyses the reaction a UDP-3-O-[(3R)-3-hydroxyacyl]-alpha-D-glucosamine + a (3R)-hydroxyacyl-[ACP] = a UDP-2-N,3-O-bis[(3R)-3-hydroxyacyl]-alpha-D-glucosamine + holo-[ACP] + H(+). The protein operates within bacterial outer membrane biogenesis; LPS lipid A biosynthesis. Functionally, catalyzes the N-acylation of UDP-3-O-acylglucosamine using 3-hydroxyacyl-ACP as the acyl donor. Is involved in the biosynthesis of lipid A, a phosphorylated glycolipid that anchors the lipopolysaccharide to the outer membrane of the cell. The protein is UDP-3-O-acylglucosamine N-acyltransferase of Xanthomonas oryzae pv. oryzae (strain MAFF 311018).